The primary structure comprises 706 residues: Heat shock protein 75 kDa, mitochondrial (706 aa).

The transit peptide at 1 to 60 (MARELRALLLWGRGLQSALRAPALAGVRRGKPVLHLQKTTVHFRDPTQSLASGISAGQLY) directs the protein to the mitochondrion. Residues Asn-121 and Asp-160 each contribute to the ATP site. Position 172 is a phosphoserine (Ser-172). Asn-173 lines the ATP pocket. Thr-176 is subject to Phosphothreonine. A Phosphoserine modification is found at Ser-196. Phe-207 contacts ATP. Residues Lys-264, Lys-326, and Lys-334 each carry the N6-acetyllysine modification. ATP is bound at residue Arg-404. N6-acetyllysine occurs at positions 426, 433, and 468. Thr-496 bears the Phosphothreonine mark. The residue at position 570 (Ser-570) is a Phosphoserine.

The protein belongs to the heat shock protein 90 family. Binds to the intracellular domain of tumor necrosis factor type 1 receptor. Binds to RB1. Interacts with SRC. Interacts with SDHA.

It localises to the mitochondrion. It is found in the mitochondrion inner membrane. Its subcellular location is the mitochondrion matrix. Its function is as follows. Chaperone that expresses an ATPase activity. Involved in maintaining mitochondrial function and polarization, downstream of PINK1 and mitochondrial complex I. Is a negative regulator of mitochondrial respiration able to modulate the balance between oxidative phosphorylation and aerobic glycolysis. The impact of TRAP1 on mitochondrial respiration is probably mediated by modulation of mitochondrial SRC and inhibition of SDHA. The protein is Heat shock protein 75 kDa, mitochondrial (Trap1) of Rattus norvegicus (Rat).